A 309-amino-acid chain; its full sequence is tRNA pseudouridine synthase B (309 aa).

The active-site Nucleophile is the Asp45.

It belongs to the pseudouridine synthase TruB family. Type 1 subfamily.

The catalysed reaction is uridine(55) in tRNA = pseudouridine(55) in tRNA. Functionally, responsible for synthesis of pseudouridine from uracil-55 in the psi GC loop of transfer RNAs. In Oleidesulfovibrio alaskensis (strain ATCC BAA-1058 / DSM 17464 / G20) (Desulfovibrio alaskensis), this protein is tRNA pseudouridine synthase B.